The following is a 207-amino-acid chain: Serotonin N-acetyltransferase (207 aa).

At T31 the chain carries Phosphothreonine; by PKA. In terms of domain architecture, N-acetyltransferase spans 35–196 (NEFRCLTPKD…TFTEMHCSLR (162 aa)). L124 lines the substrate pocket. Residues 124–126 (LAV) and 132–137 (QQGKGS) contribute to the acetyl-CoA site. A substrate-binding site is contributed by M159. Acetyl-CoA is bound at residue 168-170 (YQR). S205 bears the Phosphoserine mark.

It belongs to the acetyltransferase family. AANAT subfamily. Monomer. Interacts with several 14-3-3 proteins, including YWHAB, YWHAE, YWHAG and YWHAZ, preferentially when phosphorylated at Thr-31. Phosphorylation on Ser-205 also allows binding to YWHAZ, but with lower affinity. The interaction with YWHAZ considerably increases affinity for arylalkylamines and acetyl-CoA and protects the enzyme from dephosphorylation and proteasomal degradation. It may also prevent thiol-dependent inactivation. Post-translationally, cAMP-dependent phosphorylation on both N-terminal Thr-31 and C-terminal Ser-205 regulates AANAT activity by promoting interaction with 14-3-3 proteins. In terms of tissue distribution, high levels in pineal gland and retina.

Its subcellular location is the cytoplasm. The catalysed reaction is a 2-arylethylamine + acetyl-CoA = an N-acetyl-2-arylethylamine + CoA + H(+). It functions in the pathway aromatic compound metabolism; melatonin biosynthesis; melatonin from serotonin: step 1/2. Functionally, controls the night/day rhythm of melatonin production in the pineal gland. Catalyzes the N-acetylation of serotonin into N-acetylserotonin, the penultimate step in the synthesis of melatonin. The protein is Serotonin N-acetyltransferase (AANAT) of Bos taurus (Bovine).